An 85-amino-acid chain; its full sequence is Large ribosomal subunit protein bL31B (85 aa).

Belongs to the bacterial ribosomal protein bL31 family. Type B subfamily. In terms of assembly, part of the 50S ribosomal subunit.

The sequence is that of Large ribosomal subunit protein bL31B from Stutzerimonas stutzeri (strain A1501) (Pseudomonas stutzeri).